A 179-amino-acid chain; its full sequence is Natural killer cells antigen CD94 (179 aa).

The Cytoplasmic segment spans residues 1–10 (MAVFKTTLWW). The helical; Signal-anchor for type II membrane protein transmembrane segment at 11–31 (LISGTLGIICLSLTATLGILL) threads the bilayer. Residues 32 to 179 (KNSFTKLSIE…NRYICKQQLI (148 aa)) lie on the Extracellular side of the membrane. 2 disulfide bridges follow: cysteine 58-cysteine 70 and cysteine 61-cysteine 72. Residues 68–175 (YRCNCYFISS…CEDKNRYICK (108 aa)) form the C-type lectin domain. 2 N-linked (GlcNAc...) asparagine glycosylation sites follow: asparagine 83 and asparagine 132. 2 cysteine pairs are disulfide-bonded: cysteine 89–cysteine 174 and cysteine 152–cysteine 166.

In terms of assembly, can form disulfide-bonded heterodimer with NKG2 family members KLRC1 and KLRC2. KLRD1-KLRC1 heterodimer interacts with peptide-bound MHC-E-B2M heterotrimeric complex. KLRD1 plays a prominent role in directly interacting with MHC-E. KLRD1-KLRC1 interacts with much higher affinity with peptide-bound MHC-E-B2M than KLRD1-KLRC2. Interacts with the adapter protein TYROBP/DAP12; this interaction is required for cell surface expression and cell activation. In terms of tissue distribution, natural killer cells.

The protein localises to the cell membrane. In terms of biological role, immune receptor involved in self-nonself discrimination. In complex with KLRC1 or KLRC2 on cytotoxic and regulatory lymphocyte subsets, recognizes non-classical major histocompatibility (MHC) class Ib molecule MHC-E loaded with self-peptides derived from the signal sequence of classical MHC class Ia and non-classical MHC class Ib molecules. Enables cytotoxic cells to monitor the expression of MHC class I molecules in healthy cells and to tolerate self. Primarily functions as a ligand binding subunit as it lacks the capacity to signal. Its function is as follows. KLRD1-KLRC1 acts as an immune inhibitory receptor. Key inhibitory receptor on natural killer (NK) cells that regulates their activation and effector functions. Dominantly counteracts T cell receptor signaling on a subset of memory/effector CD8-positive T cells as part of an antigen-driven response to avoid autoimmunity. On intraepithelial CD8-positive gamma-delta regulatory T cells triggers TGFB1 secretion, which in turn limits the cytotoxic programming of intraepithelial CD8-positive alpha-beta T cells, distinguishing harmless from pathogenic antigens. In MHC-E-rich tumor microenvironment, acts as an immune inhibitory checkpoint and may contribute to progressive loss of effector functions of NK cells and tumor-specific T cells, a state known as cell exhaustion. Upon MHC-E-peptide binding, transmits intracellular signals through KLRC1 immunoreceptor tyrosine-based inhibition motifs (ITIMs) by recruiting INPP5D/SHIP-1 and INPPL1/SHIP-2 tyrosine phosphatases to ITIMs, and ultimately opposing signals transmitted by activating receptors through dephosphorylation of proximal signaling molecules. Functionally, KLRD1-KLRC2 acts as an immune activating receptor. On cytotoxic lymphocyte subsets recognizes MHC-E loaded with signal sequence-derived peptides from non-classical MHC class Ib MHC-G molecules, likely playing a role in the generation and effector functions of adaptive NK cells and in maternal-fetal tolerance during pregnancy. Regulates the effector functions of terminally differentiated cytotoxic lymphocyte subsets, and in particular may play a role in adaptive NK cell response to viral infection. Upon MHC-E-peptide binding, transmits intracellular signals via the adapter protein TYROBP/DAP12, triggering the phosphorylation of proximal signaling molecules and cell activation. The polypeptide is Natural killer cells antigen CD94 (KLRD1) (Pongo pygmaeus (Bornean orangutan)).